Here is a 100-residue protein sequence, read N- to C-terminus: Large ribosomal subunit protein eL21 (100 aa).

This sequence belongs to the eukaryotic ribosomal protein eL21 family.

The protein is Large ribosomal subunit protein eL21 of Pyrobaculum aerophilum (strain ATCC 51768 / DSM 7523 / JCM 9630 / CIP 104966 / NBRC 100827 / IM2).